The primary structure comprises 426 residues: MLDAKYIKDNLEEVAEKLATRGYQFDIAEFKAQEAKRKDLQERTQELQSQRNTISKEIGKRKSKGEDASDIFAKVNDINDELKVIEKVLKDLQDCINNTLLSMPNLPADDVPVGKDESENVEIKKWGTPREFHPEAQAKDHADIGEILNMIDFKAAAKITGSRFVVLKSKIAKLHRALTQFMLDMHTEKHGYEELYVPYMVNNDSLYGTGQLPKFSEDLFKLEGDFEYSLIPTAEVPITNLVRDEILDTESLPRYYTAHTPCFRSEAGSYGRDTKGLIRQHQFEKVELVHITIADKGEESLELLTSHAEKVLQKLNLPYRVVKLCTGDMGFSAKKTYDLEVWIPSQNTYREISSCSWCGDFQARRMKARHKNPSMKKPELVHTLNGSGLAVGRTLLAIIENYQQEDGSIMIPEALINYMGGISVIK.

Residue 233-235 coordinates L-serine; it reads TAE. 264 to 266 contributes to the ATP binding site; sequence RSE. Glu-287 is an L-serine binding site. 351–354 contributes to the ATP binding site; sequence EISS. Ser-387 provides a ligand contact to L-serine.

Belongs to the class-II aminoacyl-tRNA synthetase family. Type-1 seryl-tRNA synthetase subfamily. Homodimer. The tRNA molecule binds across the dimer.

It localises to the cytoplasm. It carries out the reaction tRNA(Ser) + L-serine + ATP = L-seryl-tRNA(Ser) + AMP + diphosphate + H(+). The enzyme catalyses tRNA(Sec) + L-serine + ATP = L-seryl-tRNA(Sec) + AMP + diphosphate + H(+). It participates in aminoacyl-tRNA biosynthesis; selenocysteinyl-tRNA(Sec) biosynthesis; L-seryl-tRNA(Sec) from L-serine and tRNA(Sec): step 1/1. Catalyzes the attachment of serine to tRNA(Ser). Is also able to aminoacylate tRNA(Sec) with serine, to form the misacylated tRNA L-seryl-tRNA(Sec), which will be further converted into selenocysteinyl-tRNA(Sec). The polypeptide is Serine--tRNA ligase (Francisella philomiragia subsp. philomiragia (strain ATCC 25017 / CCUG 19701 / FSC 153 / O#319-036)).